Reading from the N-terminus, the 396-residue chain is MPNTPSPLALTQGLIRCPSVTPAEGGALSLLADLLGAAGFSVERPVFSEPGTPDVENLYARIGTAGPCLLLAGHTDVVPPGDLAAWRHDPFGGVVEEGEVHGRGAVDMKGGIACLAAAILAFLAERGPDFGGSIAFLITGDEEGPAVNGTVKLLAWARQKGERFDHCILAEPTNPDRLGDMIKIGRRGSLTAALTVHGVQGHVAYPHRAENPIPGLIRLAGALLAAPLDAGTAHFDASNLEFTTVDVGNPASNVIPAEARAVFNIRFNDLWTPATLEAELRRRLDAAAGNAVRYTLAVQPTNAVAFLTQPDPFVDLVTAAIEAETGRRPALSTTGGTSDARFIKDACPVIEFGLVGQTMHQIDERAALADLDRLTAIFRRVLDAYFPGDAALQKRA.

His-74 contacts Zn(2+). Asp-76 is a catalytic residue. Asp-107 contacts Zn(2+). Glu-142 serves as the catalytic Proton acceptor. Zn(2+)-binding residues include Glu-143, Glu-171, and His-360.

It belongs to the peptidase M20A family. DapE subfamily. As to quaternary structure, homodimer. The cofactor is Zn(2+). Co(2+) serves as cofactor.

It catalyses the reaction N-succinyl-(2S,6S)-2,6-diaminopimelate + H2O = (2S,6S)-2,6-diaminopimelate + succinate. It participates in amino-acid biosynthesis; L-lysine biosynthesis via DAP pathway; LL-2,6-diaminopimelate from (S)-tetrahydrodipicolinate (succinylase route): step 3/3. Functionally, catalyzes the hydrolysis of N-succinyl-L,L-diaminopimelic acid (SDAP), forming succinate and LL-2,6-diaminopimelate (DAP), an intermediate involved in the bacterial biosynthesis of lysine and meso-diaminopimelic acid, an essential component of bacterial cell walls. This Methylobacterium nodulans (strain LMG 21967 / CNCM I-2342 / ORS 2060) protein is Succinyl-diaminopimelate desuccinylase.